Here is a 180-residue protein sequence, read N- to C-terminus: ATP synthase subunit delta (180 aa).

This sequence belongs to the ATPase delta chain family. In terms of assembly, F-type ATPases have 2 components, F(1) - the catalytic core - and F(0) - the membrane proton channel. F(1) has five subunits: alpha(3), beta(3), gamma(1), delta(1), epsilon(1). F(0) has three main subunits: a(1), b(2) and c(10-14). The alpha and beta chains form an alternating ring which encloses part of the gamma chain. F(1) is attached to F(0) by a central stalk formed by the gamma and epsilon chains, while a peripheral stalk is formed by the delta and b chains.

The protein localises to the cell membrane. Its function is as follows. F(1)F(0) ATP synthase produces ATP from ADP in the presence of a proton or sodium gradient. F-type ATPases consist of two structural domains, F(1) containing the extramembraneous catalytic core and F(0) containing the membrane proton channel, linked together by a central stalk and a peripheral stalk. During catalysis, ATP synthesis in the catalytic domain of F(1) is coupled via a rotary mechanism of the central stalk subunits to proton translocation. Functionally, this protein is part of the stalk that links CF(0) to CF(1). It either transmits conformational changes from CF(0) to CF(1) or is implicated in proton conduction. The chain is ATP synthase subunit delta from Leuconostoc citreum (strain KM20).